Reading from the N-terminus, the 131-residue chain is Profilin-5 (131 aa).

Cysteines 13 and 115 form a disulfide. Residues 81–97 (AVIRGKKGAGGITIKKT) carry the Involved in PIP2 interaction motif. A Phosphothreonine modification is found at T111.

This sequence belongs to the profilin family. Occurs in many kinds of cells as a complex with monomeric actin in a 1:1 ratio. In terms of processing, phosphorylated by MAP kinases.

Its subcellular location is the cytoplasm. The protein resides in the cytoskeleton. Functionally, binds to actin and affects the structure of the cytoskeleton. At high concentrations, profilin prevents the polymerization of actin, whereas it enhances it at low concentrations. The polypeptide is Profilin-5 (Phleum pratense (Common timothy)).